A 193-amino-acid polypeptide reads, in one-letter code: Phosphoheptose isomerase (193 aa).

The 157-residue stretch at 37-193 (LANAFKAGGK…QLIEKEMADQ (157 aa)) folds into the SIS domain. Residue 52 to 54 (NGG) participates in substrate binding. 2 residues coordinate Zn(2+): H61 and E65. Residues E65, 93 to 94 (ND), 119 to 121 (STS), S124, and Q172 each bind substrate. 2 residues coordinate Zn(2+): Q172 and H180.

This sequence belongs to the SIS family. GmhA subfamily. In terms of assembly, homotetramer. Requires Zn(2+) as cofactor.

It localises to the cytoplasm. It catalyses the reaction 2 D-sedoheptulose 7-phosphate = D-glycero-alpha-D-manno-heptose 7-phosphate + D-glycero-beta-D-manno-heptose 7-phosphate. The protein operates within carbohydrate biosynthesis; D-glycero-D-manno-heptose 7-phosphate biosynthesis; D-glycero-alpha-D-manno-heptose 7-phosphate and D-glycero-beta-D-manno-heptose 7-phosphate from sedoheptulose 7-phosphate: step 1/1. In terms of biological role, catalyzes the isomerization of sedoheptulose 7-phosphate in D-glycero-D-manno-heptose 7-phosphate. The polypeptide is Phosphoheptose isomerase (Pectobacterium atrosepticum (strain SCRI 1043 / ATCC BAA-672) (Erwinia carotovora subsp. atroseptica)).